The sequence spans 227 residues: 2,3-bisphosphoglycerate-dependent phosphoglycerate mutase (227 aa).

Substrate contacts are provided by residues 8 to 15 (RHGKSVWN), 21 to 22 (TG), R58, 110 to 113 (ERMY), K121, 137 to 138 (RR), and 181 to 182 (GN). H9 (tele-phosphohistidine intermediate) is an active-site residue. E110 functions as the Proton donor/acceptor in the catalytic mechanism.

Belongs to the phosphoglycerate mutase family. BPG-dependent PGAM subfamily.

The enzyme catalyses (2R)-2-phosphoglycerate = (2R)-3-phosphoglycerate. It participates in carbohydrate degradation; glycolysis; pyruvate from D-glyceraldehyde 3-phosphate: step 3/5. Catalyzes the interconversion of 2-phosphoglycerate and 3-phosphoglycerate. In Chlamydia felis (strain Fe/C-56) (Chlamydophila felis), this protein is 2,3-bisphosphoglycerate-dependent phosphoglycerate mutase.